The primary structure comprises 531 residues: Serine protease gd (531 aa).

A signal peptide spans 1 to 19 (MRLHLAAILILCIEHVTKA). Residues 155-174 (PEEEEVRKTDDKPPSTPHIQ) form a disordered region. One can recognise a Peptidase S1 domain in the interval 246 to 531 (IESDSADSLP…FLDWITAFVI (286 aa)). N-linked (GlcNAc...) asparagine glycosylation occurs at Asn272. Cys280 and Cys296 form a disulfide bridge. Catalysis depends on charge relay system residues His295 and Asp350. N-linked (GlcNAc...) asparagine glycans are attached at residues Asn397 and Asn445. A disulfide bond links Cys432 and Cys449. Catalysis depends on Ser471, which acts as the Charge relay system.

Belongs to the peptidase S1 family. Post-translationally, proteolytically activated by the protease ndl. Expression begins in previtellogenic stages and is seen in germline-derived nurse cells of the germarium. Expression continues throughout oogenesis with transcripts from the nurse cells accumulating in the oocytes. Most abundant in the ovaries, the level of protein decreases from the moment of egg laying and is essentially gone by 4 hours.

It is found in the secreted. Component of the extracellular signaling pathway that establishes the dorsal-ventral pathway of the embryo. A protease cascade involving ndl, gd, snk and ea results in activation of the spz Toll receptor ligand; acts downstream of ndl but upstream of snk and ea. Activation of ea requires activation of the ndl-gd-snk protease cascade and sulfation of a vitelline membrane component by pip. Localized activation of the Toll receptor in the ventral region of the embryo defines cell identities along the dorsal-ventral continuum. The chain is Serine protease gd from Drosophila melanogaster (Fruit fly).